A 593-amino-acid chain; its full sequence is MTADNALYIPPYKADDQDVVVELNNRFGAEAFTAQPTRTGMPVLWVERARLFEILTFLRNVPKPYSMLYDLHGVDERLRTNRRGLPGADFTVFYHLLSIERNSDVMIKVALSESDLSVPTITSIWPNANWYEREVWDMFGIDFPGHPHLSRIMMPPTWEGHPLRKDFPARATEFDPYSLTLAKQQLEEEAARFRPEDWGMKRSGANEDYMFLNLGPNHPSAHGAFRIILQLDGEEIVDCVPDIGYHHRGAEKMAERQSWHSFIPYTDRIDYLGGVMNNLPYVLSVEKLAGIKVPEKVDVIRIMMAEFFRITSHLLFLGTYIQDVGAMTPVFFTFTDRQKAYTVIEAITGFRLHPAWYRIGGVAHDLPRGWEKLVKDFVDWLPKRLDEYTKAALQNSILKGRTIGVAAYNTKEALEWGVTGAGLRSTGCDFDLRKARPYSGYENFEFEVPLAANGDAYDRCMVRVEEMRQSIKIIDQCMRNMPEGPYKADHPLTTPPPKERTLQHIETLITHFLQVSWGPVMPANESFQMIEATKGINSYYLTSDGGTMSYRTRIRTPSYPHLQQIPSVIKGSMVADLIAYLGSIDFVMADVDR.

An NADH dehydrogenase I subunit C region spans residues 1 to 184 (MTADNALYIP…DPYSLTLAKQ (184 aa)). Residues 208 to 593 (DYMFLNLGPN…IDFVMADVDR (386 aa)) are NADH dehydrogenase I subunit D.

The protein in the N-terminal section; belongs to the complex I 30 kDa subunit family. It in the C-terminal section; belongs to the complex I 49 kDa subunit family. In terms of assembly, NDH-1 is composed of 13 different subunits. Subunits NuoB, CD, E, F, and G constitute the peripheral sector of the complex.

The protein localises to the cell inner membrane. The enzyme catalyses a quinone + NADH + 5 H(+)(in) = a quinol + NAD(+) + 4 H(+)(out). In terms of biological role, NDH-1 shuttles electrons from NADH, via FMN and iron-sulfur (Fe-S) centers, to quinones in the respiratory chain. The immediate electron acceptor for the enzyme in this species is believed to be ubiquinone. Couples the redox reaction to proton translocation (for every two electrons transferred, four hydrogen ions are translocated across the cytoplasmic membrane), and thus conserves the redox energy in a proton gradient. This chain is NADH-quinone oxidoreductase subunit C/D, found in Pseudomonas syringae pv. syringae (strain B728a).